The primary structure comprises 139 residues: uncharacterized protein (139 aa).

The HIT domain maps to 3–110 (IFCNIVEGRD…VPTWSQDPDI (108 aa)). A Histidine triad motif motif is present at residues 95 to 99 (HSHFH).

This is an uncharacterized protein from Saccharolobus solfataricus (strain ATCC 35092 / DSM 1617 / JCM 11322 / P2) (Sulfolobus solfataricus).